The primary structure comprises 461 residues: Nucleobindin-1 (461 aa).

An N-terminal signal peptide occupies residues Met-1–Ala-26. An O-glycosylated at one site region spans residues Thr-42–Tyr-51. Ser-86 is subject to Phosphoserine; by FAM20C. Position 148 is a phosphothreonine; by FAM20C (Thr-148). Residues Glu-150 to Lys-218 adopt a coiled-coil conformation. A DNA-binding region spans residues His-172 to Lys-218. The span at Ser-193–Gln-210 shows a compositional bias: basic and acidic residues. Residues Ser-193–Val-221 form a disordered region. Residues Leu-228 to Thr-321 are binds to GNAI2 and GNAI3. EF-hand domains follow at residues Pro-240–Lys-275 and Glu-292–Gly-327. Residues Asp-253, Asn-255, Asp-257, Glu-264, Asp-305, Asn-307, Asp-309, and Glu-316 each contribute to the Ca(2+) site. Positions Asn-303–Trp-333 match the GBA motif. Residues Ala-341–Gln-407 adopt a coiled-coil conformation. The disordered stretch occupies residues Leu-368 to Leu-461. Residue Ser-369 is modified to Phosphoserine; by FAM20C. The span at Asp-437–Leu-461 shows a compositional bias: basic and acidic residues.

It belongs to the nucleobindin family. As to quaternary structure, interacts (via GBA motif) with guanine nucleotide-binding protein G(i) alpha subunits GNAI1, GNAI2 and GNAI3 with higher affinity for GNAI1 and GNAI3 than for GNAI2. Preferentially interacts with inactive rather than active GNAI3. Interaction with GNAI3 is inhibited when NUCB1 binds calcium, probably due to a conformational change which renders the GBA motif inaccessible. O-glycosylated. In terms of tissue distribution, expressed both in fetal and adult heart, lung, liver, kidney and brain, and in adult skeletal muscle, placenta and pancreas.

It localises to the golgi apparatus. The protein resides in the cis-Golgi network membrane. The protein localises to the cytoplasm. Its subcellular location is the secreted. In terms of biological role, major calcium-binding protein of the Golgi which may have a role in calcium homeostasis. Acts as a non-receptor guanine nucleotide exchange factor which binds to and activates alpha subunits of guanine nucleotide-binding proteins (G proteins). The polypeptide is Nucleobindin-1 (NUCB1) (Homo sapiens (Human)).